We begin with the raw amino-acid sequence, 485 residues long: Arginine/agmatine antiporter (485 aa).

A run of 12 helical transmembrane segments spans residues 12–34, 38–60, 89–111, 126–148, 155–177, 211–230, 243–265, 291–313, 363–385, 400–422, 427–446, and 461–483; these read GTIA…SLPQ, ATAG…FFIA, IGFT…YAVI, GGNT…FIVL, SIIN…ILTA, TMLV…VMSG, VLGF…GSLF, VLMN…IIVA, WNTM…AAFL, IKAP…LIYA, YLFM…IDAG, and IVGM…TGRI.

It belongs to the amino acid-polyamine-organocation (APC) superfamily. Basic amino acid/polyamine antiporter (APA) (TC 2.A.3.2) family.

It is found in the cell inner membrane. Functionally, catalyzes the exchange of L-arginine for agmatine. The arginine uptake by the bacterium in the macrophage may be a virulence factor against the host innate immune response. This Chlamydia pneumoniae (Chlamydophila pneumoniae) protein is Arginine/agmatine antiporter (aaxC).